A 255-amino-acid polypeptide reads, in one-letter code: Hydroxyacylglutathione hydrolase (255 aa).

7 residues coordinate Zn(2+): H56, H58, D60, H61, H114, D133, and H171.

Belongs to the metallo-beta-lactamase superfamily. Glyoxalase II family. As to quaternary structure, monomer. Zn(2+) serves as cofactor.

It catalyses the reaction an S-(2-hydroxyacyl)glutathione + H2O = a 2-hydroxy carboxylate + glutathione + H(+). It functions in the pathway secondary metabolite metabolism; methylglyoxal degradation; (R)-lactate from methylglyoxal: step 2/2. Its function is as follows. Thiolesterase that catalyzes the hydrolysis of S-D-lactoyl-glutathione to form glutathione and D-lactic acid. The polypeptide is Hydroxyacylglutathione hydrolase (Nitrobacter hamburgensis (strain DSM 10229 / NCIMB 13809 / X14)).